The following is a 161-amino-acid chain: Gamma-glutamylaminecyclotransferase A (161 aa).

Residue Tyr-26–Leu-29 participates in substrate binding. Glu-101 serves as the catalytic Proton acceptor.

It belongs to the gamma-glutamylcyclotransferase family.

It catalyses the reaction epsilon-(gamma-L-glutamyl)-L-lysine = 5-oxo-L-proline + L-lysine. May contribute to degradation of proteins cross-linked by transglutaminases by degrading the cross-link between a lysine and a glutamic acid residue. Catalyzes the formation of 5-oxo-L-proline from L-gamma-glutamyl-L-epsilon-lysine. This Danio rerio (Zebrafish) protein is Gamma-glutamylaminecyclotransferase A (ggact.1).